A 407-amino-acid polypeptide reads, in one-letter code: Queuine tRNA-ribosyltransferase-like protein (407 aa).

It belongs to the queuine tRNA-ribosyltransferase family.

This is Queuine tRNA-ribosyltransferase-like protein from Plasmodium falciparum (isolate 3D7).